Consider the following 451-residue polypeptide: MAEVEALPGLKQPVDDAGLLEDANQVHTLVIPSGHIWRVELSSDEKLSLKVTAGIGEIFGTELANNVEYTFWDWKFGIYAVEELEIEWKCPQLHDRELSIVENTTAHNVYNLHFALEKMRSSTFDGPRIMVVGEKNTGKTALCRTLCSYAIKNKPYQPMFVNLNPVEPIFSPPGCVTAVPISSTLDAQLPRWGETMTSGATRLHGKQPIIKNFGFETIAENRSLYKLVTKKLFETVSERLQNDSLVHRSGCIVDSPPLENCDDEYSELVEAIVGLRINYLIILCNDNDKGREIYTKVSKIVNTYVGERLLRVPTMAGVFEKDDVYIRAQQRAAIREYFYGDTRTVLSPYNLGCDTSDITVWRPKSVLQGENTNLDTLEVAPVDSSTLQYALVAITYASRKSDSEEVLQAPILGFGLITELNEKRNKLKILLPVPGRLPPNAMILTSFRYLE.

Residues lysine 75 and 136 to 141 (NTGKTA) contribute to the ATP site.

It belongs to the Clp1 family. Clp1 subfamily. As to quaternary structure, component of a pre-mRNA cleavage factor complex. Interacts directly with PCF11.

The protein localises to the nucleus. Functionally, required for endonucleolytic cleavage during polyadenylation-dependent pre-mRNA 3'-end formation. This chain is mRNA cleavage and polyadenylation factor CLP1, found in Candida glabrata (strain ATCC 2001 / BCRC 20586 / JCM 3761 / NBRC 0622 / NRRL Y-65 / CBS 138) (Yeast).